Here is a 136-residue protein sequence, read N- to C-terminus: Ribosome-binding factor A (136 aa).

The segment at 1-22 is disordered; sequence MNTAGPAGKLAGHAASGPTQRQ.

The protein belongs to the RbfA family. In terms of assembly, monomer. Binds 30S ribosomal subunits, but not 50S ribosomal subunits or 70S ribosomes.

It is found in the cytoplasm. In terms of biological role, one of several proteins that assist in the late maturation steps of the functional core of the 30S ribosomal subunit. Associates with free 30S ribosomal subunits (but not with 30S subunits that are part of 70S ribosomes or polysomes). Required for efficient processing of 16S rRNA. May interact with the 5'-terminal helix region of 16S rRNA. The protein is Ribosome-binding factor A of Gluconacetobacter diazotrophicus (strain ATCC 49037 / DSM 5601 / CCUG 37298 / CIP 103539 / LMG 7603 / PAl5).